Reading from the N-terminus, the 1592-residue chain is ABC transporter ATP-binding protein/permease VMR1 (1592 aa).

At 1–33 (MGTDPLIIRNNGSFWEVDDFTRLGRTQLLSYYL) the chain is on the vacuolar side. N-linked (GlcNAc...) asparagine glycosylation is present at Asn-11. A helical transmembrane segment spans residues 34–54 (PLAIIASIGIFALCRSGLSRY). Over 55-74 (VRSAECDLVNEYLFGAQEER) the chain is Cytoplasmic. A helical transmembrane segment spans residues 75–95 (KEDNSIERLLRNSNTQANYVN). The Vacuolar segment spans residues 96–100 (VKKQG). Residues 101-121 (RILKLRHFDITTIDVKQIDAK) form a helical membrane-spanning segment. Over 122-131 (NHGGLTFSRP) the chain is Cytoplasmic. A helical transmembrane segment spans residues 132 to 152 (STSDHLRKSSEIVLMSLQIIG). Over 153-170 (LSFLRVTKINIELTNRDV) the chain is Vacuolar. The helical transmembrane segment at 171–191 (TTLLLFWLILLSLSILRVYKR) threads the bilayer. Topologically, residues 192 to 329 (STNLWAICFT…NKHINNLTLA (138 aa)) are cytoplasmic. A helical transmembrane segment spans residues 330–350 (LFESFKTYLLIGMLWVLVNSI). The 295-residue stretch at 338-632 (LLIGMLWVLV…LSNMLSFINQ (295 aa)) folds into the ABC transmembrane type-1 1 domain. The Vacuolar portion of the chain corresponds to 351 to 379 (VNLLPTILMKRFLEIVDNPNRSSSCMNLA). Asn-370 carries an N-linked (GlcNAc...) asparagine glycan. A helical transmembrane segment spans residues 380-400 (WLYIIGMFICRLTLAICNSQG). The Cytoplasmic portion of the chain corresponds to 401 to 465 (QFVSDKICLR…SFKVSELANY (65 aa)). Residues 466 to 486 (LYVTVQAVIMIIVVVGLLFNF) form a helical membrane-spanning segment. Topologically, residues 487–489 (LGV) are vacuolar. The helical transmembrane segment at 490 to 510 (SAFAGISIILVMFPLNFLLAN) threads the bilayer. The Cytoplasmic portion of the chain corresponds to 511–572 (LLGKFQKQTL…SLLKKSLVWS (62 aa)). Residues 573–593 (VTSFLWFVTPTLVTGVTFAIC) traverse the membrane as a helical segment. Residues 594–614 (TFVQHEDLNAPLAFTTLSLFT) are Vacuolar-facing. The helical transmembrane segment at 615-635 (LLKTPLDQLSNMLSFINQSKV) threads the bilayer. Residues 636 to 989 (SLKRISDFLR…ALTALFALYI (354 aa)) are Cytoplasmic-facing. One can recognise an ABC transporter 1 domain in the interval 664 to 908 (IEFKNATLTW…GLFKEKYVQL (245 aa)). 702–709 (GSTGSGKS) is a binding site for ATP. An ABC transmembrane type-1 2 domain is found at 981–1282 (LTALFALYIT…LVRLYSTFEM (302 aa)). A helical transmembrane segment spans residues 990-1010 (TAQILFISQSWWIRHWVNDTN). Residues 1011 to 1051 (VRINAPGFAMDTLPLKGMTDSSKNKHNAFYYLTVYFLIGII) are Vacuolar-facing. The chain crosses the membrane as a helical span at residues 1052-1072 (QAMLGGFKTMMTFLSGMRASR). Residues 1073 to 1115 (KIFNNLLDLVLHAQIRFFDVTPVGRIMNRFSKDIEGVDQELIP) lie on the Cytoplasmic side of the membrane. The chain crosses the membrane as a helical span at residues 1116–1136 (YLEVTIFCLIQCASIIFLITV). A topological domain (vacuolar) is located at residue Ile-1137. Residues 1138-1158 (TPRFLTVAVIVFVLYFFVGKW) traverse the membrane as a helical segment. Topologically, residues 1159–1229 (YLTASRELKR…VTVKWFSFRV (71 aa)) are cytoplasmic. A helical membrane pass occupies residues 1230-1250 (DMIGAFIVLASGSFILLNIAN). Residues 1251–1252 (ID) are Vacuolar-facing. A helical membrane pass occupies residues 1253–1273 (SGLAGISLTYAILFTDGALWL). Over 1274–1592 (VRLYSTFEMN…IAKQSSKMMK (319 aa)) the chain is Cytoplasmic. The 250-residue stretch at 1323 to 1572 (IEIENLSLRY…ERGIFYSMCR (250 aa)) folds into the ABC transporter 2 domain. ATP is bound at residue 1357 to 1364 (GRTGAGKS).

Belongs to the ABC transporter superfamily. In terms of assembly, ABC transporter which may be involved in multidrug resistance.

It is found in the vacuole membrane. This chain is ABC transporter ATP-binding protein/permease VMR1 (VMR1), found in Saccharomyces cerevisiae (strain ATCC 204508 / S288c) (Baker's yeast).